The chain runs to 466 residues: Argininosuccinate lyase (466 aa).

The protein belongs to the lyase 1 family. Argininosuccinate lyase subfamily.

It localises to the cytoplasm. It carries out the reaction 2-(N(omega)-L-arginino)succinate = fumarate + L-arginine. The protein operates within amino-acid biosynthesis; L-arginine biosynthesis; L-arginine from L-ornithine and carbamoyl phosphate: step 3/3. This is Argininosuccinate lyase from Brucella canis (strain ATCC 23365 / NCTC 10854 / RM-666).